Reading from the N-terminus, the 205-residue chain is Methylthioribulose-1-phosphate dehydratase (205 aa).

Positions 95 and 97 each coordinate Zn(2+).

Belongs to the aldolase class II family. MtnB subfamily. It depends on Zn(2+) as a cofactor.

The enzyme catalyses 5-(methylsulfanyl)-D-ribulose 1-phosphate = 5-methylsulfanyl-2,3-dioxopentyl phosphate + H2O. The protein operates within amino-acid biosynthesis; L-methionine biosynthesis via salvage pathway; L-methionine from S-methyl-5-thio-alpha-D-ribose 1-phosphate: step 2/6. Catalyzes the dehydration of methylthioribulose-1-phosphate (MTRu-1-P) into 2,3-diketo-5-methylthiopentyl-1-phosphate (DK-MTP-1-P). The chain is Methylthioribulose-1-phosphate dehydratase from Microcystis aeruginosa (strain NIES-843 / IAM M-2473).